The sequence spans 1213 residues: DNA-directed RNA polymerase subunit beta (1213 aa).

Residues 1153–1213 (RDMDEDSSEH…ADESDGKVSK (61 aa)) are disordered. Residues 1171 to 1198 (MAEEQEKKKLAEETGKSENKEDSNETAD) show a composition bias toward basic and acidic residues.

Belongs to the RNA polymerase beta chain family. In terms of assembly, the RNAP catalytic core consists of 2 alpha, 1 beta, 1 beta' and 1 omega subunit. When a sigma factor is associated with the core the holoenzyme is formed, which can initiate transcription.

The catalysed reaction is RNA(n) + a ribonucleoside 5'-triphosphate = RNA(n+1) + diphosphate. Its function is as follows. DNA-dependent RNA polymerase catalyzes the transcription of DNA into RNA using the four ribonucleoside triphosphates as substrates. The polypeptide is DNA-directed RNA polymerase subunit beta (Lactobacillus acidophilus (strain ATCC 700396 / NCK56 / N2 / NCFM)).